A 122-amino-acid chain; its full sequence is Atrial gland peptide B (122 aa).

Residues 1-21 (MKANTMFIILCLTLSTLCVSS) form the signal peptide. Positions 22–34 (QFTSVLGKIFVTN) are excised as a propeptide. Isoleucine amide is present on isoleucine 69. Positions 73–122 (AAGGMEQSEGQNPETKSHSWRERSVLTPSLLSLGESLESGISKRISINQD) are excised as a propeptide. Residues 74 to 95 (AGGMEQSEGQNPETKSHSWRER) form a disordered region.

Belongs to the molluscan ELH family.

It is found in the secreted. Its function is as follows. The atrial gland peptide A and peptide B precursors are the source of the 2 peptides that, upon release from this reproductive system gland, initiate the egg-laying process by exciting the bag cell neurons. These neurons, clustered in neural connectives near the abdominal ganglion, in turn release other peptides that act directly on the ganglion and also, via the circulating hemolymph, on many other organs to control the physiological processes of egg-laying. One of these other peptides is the egg-laying hormone. In Aplysia californica (California sea hare), this protein is Atrial gland peptide B.